A 123-amino-acid chain; its full sequence is Cyclic ether formation enzyme xenC (123 aa).

The signal sequence occupies residues 1-24; the sequence is MSSLLLSDVLSYGIFGFSALCVQA. Transmembrane regions (helical) follow at residues 58–78 and 102–122; these read SALRYVFVSINIAVCVLLWSP and LGESPIPHLLLVSTVGAAILV.

This sequence belongs to the cyclic ether formation enzyme xenC family.

It is found in the membrane. The protein operates within mycotoxin biosynthesis. Functionally, cyclic ether formation enzyme; part of the gene cluster that mediates the biosynthesis of xenoacremones such as xenoacremone A, a compound that shows inhibitory activity toward the PI3K/AKT signaling pathway and which has the ability to induce apoptosis of A549 lung cancer cells. Within the pathway, cooperation of the hybrid PKS-NRPS xenE and the trans-acting enoyl reductase xenG is responsible for the formation of the reduced tyrosine-nonaketide derivative. The alpha/beta hydrolase xenA then accelerates intramolecular nucleophilic attack to give a pyrrolidone derivative. Subsequently, three enzymes, xenF, xenD, and xenC, coordinately participate in the conversion to xenoacremone B. XenF catalyzes sigmatropic rearrangement to form an A-ring, which leads to an unusual intermediate with a hexane ring, which is required for the formation of the tricarbocyclic product. Epoxidation catalyzed by xenD and the formation of the paracyclophane ether catalyzed by xenC initiate a spontaneous intramolecular Diels-Alder (IMDA) reaction to yield xenoacremone B. Spontaneous hydration of xenoacremone B leads to the formation of xenoacremone A, which undergoes subsequent methylation to afford xenoacremone C. The protein is Cyclic ether formation enzyme xenC of Xenoacremonium sinensis (Endophyte fungus).